A 328-amino-acid chain; its full sequence is Olfactory receptor 4A16 (328 aa).

Topologically, residues 1–23 are extracellular; the sequence is MRPSSNVTEFVLLGLTQDPDVKK. Asn-6 carries an N-linked (GlcNAc...) asparagine glycan. The chain crosses the membrane as a helical span at residues 24-47; sequence TLFVMFLLIYIVTMVGNLLIWVTT. The Cytoplasmic portion of the chain corresponds to 48–55; that stretch reads IGSPSLGS. Residues 56–77 traverse the membrane as a helical segment; the sequence is LMYFFLAYLSLMDAIYSTAMSP. Topologically, residues 78–98 are extracellular; that stretch reads KLMIDLLCDKIAISLSACMGQ. The cysteines at positions 95 and 187 are disulfide-linked. A helical membrane pass occupies residues 99 to 118; it reads LFIEHLLGGAEVFLLVVMAY. Topologically, residues 119–137 are cytoplasmic; the sequence is DRYVAISKPLHYLNIMNRL. A helical membrane pass occupies residues 138 to 156; that stretch reads VCILLLVVAMIGGFVHSVV. Over 157-193 the chain is Extracellular; that stretch reads QIVFLYSLPICGPNVIDHSVCDMYPLLELLCLDTYFI. Residues 194–217 form a helical membrane-spanning segment; sequence GLTVVANGGIICMVIFTFLLISCG. At 218–233 the chain is on the cytoplasmic side; sequence VILNFLKTYSQEERHK. Residues 234-256 traverse the membrane as a helical segment; the sequence is ALPTCISHIIVVALVFVPCIFMY. The Extracellular segment spans residues 257-267; sequence VRPVSNFPFDK. The helical transmembrane segment at 268–287 threads the bilayer; that stretch reads LMTVFYSIITLMLNPLIYSL. Topologically, residues 288–328 are cytoplasmic; that stretch reads RQSEMKNAMKNLWCEKLSIVRKRVSPTLNIFIPSSKATNRR.

This sequence belongs to the G-protein coupled receptor 1 family.

It is found in the cell membrane. Functionally, odorant receptor. The polypeptide is Olfactory receptor 4A16 (OR4A16) (Homo sapiens (Human)).